A 39-amino-acid polypeptide reads, in one-letter code: Photosystem II reaction center protein L (39 aa).

Residues 18–38 (SLYLGLLLIAVLGILFSSYFF) form a helical membrane-spanning segment.

This sequence belongs to the PsbL family. In terms of assembly, PSII is composed of 1 copy each of membrane proteins PsbA, PsbB, PsbC, PsbD, PsbE, PsbF, PsbH, PsbI, PsbJ, PsbK, PsbL, PsbM, PsbT, PsbX, PsbY, PsbZ, Psb30/Ycf12, peripheral proteins PsbO, CyanoQ (PsbQ), PsbU, PsbV and a large number of cofactors. It forms dimeric complexes.

It localises to the cellular thylakoid membrane. Functionally, one of the components of the core complex of photosystem II (PSII). PSII is a light-driven water:plastoquinone oxidoreductase that uses light energy to abstract electrons from H(2)O, generating O(2) and a proton gradient subsequently used for ATP formation. It consists of a core antenna complex that captures photons, and an electron transfer chain that converts photonic excitation into a charge separation. This subunit is found at the monomer-monomer interface and is required for correct PSII assembly and/or dimerization. The protein is Photosystem II reaction center protein L of Picosynechococcus sp. (strain ATCC 27264 / PCC 7002 / PR-6) (Agmenellum quadruplicatum).